Consider the following 305-residue polypeptide: Dihydroorotate dehydrogenase B (NAD(+)), catalytic subunit (305 aa).

Residues serine 23 and 47 to 48 each bind FMN; that span reads KG. Substrate contacts are provided by residues lysine 47 and 71–75; that span reads NAIGL. Residues asparagine 101 and asparagine 129 each coordinate FMN. Asparagine 129 serves as a coordination point for substrate. Catalysis depends on cysteine 132, which acts as the Nucleophile. Residues lysine 167 and isoleucine 193 each contribute to the FMN site. A substrate-binding site is contributed by 194-195; sequence NT. FMN contacts are provided by residues glycine 219, 245–246, and 267–268; these read GG and GT.

This sequence belongs to the dihydroorotate dehydrogenase family. Type 1 subfamily. Heterotetramer of 2 PyrK and 2 PyrD type B subunits. FMN serves as cofactor.

It is found in the cytoplasm. It catalyses the reaction (S)-dihydroorotate + NAD(+) = orotate + NADH + H(+). Its pathway is pyrimidine metabolism; UMP biosynthesis via de novo pathway; orotate from (S)-dihydroorotate (NAD(+) route): step 1/1. In terms of biological role, catalyzes the conversion of dihydroorotate to orotate with NAD(+) as electron acceptor. This chain is Dihydroorotate dehydrogenase B (NAD(+)), catalytic subunit (pyrD), found in Geotalea daltonii (strain DSM 22248 / JCM 15807 / FRC-32) (Geobacter daltonii).